A 282-amino-acid polypeptide reads, in one-letter code: NAC domain-containing protein 1 (282 aa).

Positions leucine 9 to lysine 161 constitute an NAC domain. Residues valine 106 to threonine 167 mediate DNA binding. The stretch at lysine 161–asparagine 188 forms a coiled coil.

Expressed in roots, stem, flowers, and leaves.

It is found in the nucleus. Transcription factor that binds DNA motifs 5'-CGT[AG](5N)NACG[ACT][AC][AT][ACG][ACT]-3' and 5'-CACG[ACT][AC][AT][AGT][CT]-3' in target genes promoters. Promotes leaf senescence and reduces fruit yield and sugar content, probably by establishing abscisic acid (ABA) homeostasis. The sequence is that of NAC domain-containing protein 1 from Solanum lycopersicum (Tomato).